We begin with the raw amino-acid sequence, 122 residues long: Large ribosomal subunit protein uL14 (122 aa).

Belongs to the universal ribosomal protein uL14 family. In terms of assembly, part of the 50S ribosomal subunit. Forms a cluster with proteins L3 and L19. In the 70S ribosome, L14 and L19 interact and together make contacts with the 16S rRNA in bridges B5 and B8.

Binds to 23S rRNA. Forms part of two intersubunit bridges in the 70S ribosome. In Elusimicrobium minutum (strain Pei191), this protein is Large ribosomal subunit protein uL14.